A 3994-amino-acid chain; its full sequence is Hybrid PKS-NRPs synthetase opdA (3994 aa).

The Ketosynthase family 3 (KS3) domain occupies 6–442; sequence PEPIAIVGSS…GTNSHVILES (437 aa). Active-site for beta-ketoacyl synthase activity residues include cysteine 179, histidine 316, and histidine 362. The interval 559 to 881 is malonyl-CoA:ACP transacylase (MAT) domain; sequence VFTGQGAQWP…LKRDSNDVEA (323 aa). The tract at residues 951 to 1085 is N-terminal hotdog fold; sequence HELLGRRTHD…GRLIIHLGET (135 aa). Positions 951–1251 are dehydratase (DH) domain; sequence HELLGRRTHD…SVKPMAPPTA (301 aa). A PKS/mFAS DH domain is found at 951–1252; that stretch reads HELLGRRTHD…VKPMAPPTAE (302 aa). The active-site Proton acceptor; for dehydratase activity is histidine 983. Residues 1100–1252 form a C-terminal hotdog fold region; it reads LLSVDTDEGY…VKPMAPPTAE (153 aa). Aspartate 1159 (proton donor; for dehydratase activity) is an active-site residue. Residues 1292–1593 form a methyltransferase (MT) domain region; the sequence is DRVVLYYVQR…VDLAFHDLPD (302 aa). The ketoreductase (KR) domain stretch occupies residues 2123–2297; the sequence is TYLMVGMAGG…ASIIHIGFVT (175 aa). The Carrier 1 domain occupies 2406-2483; that stretch reads EAVEITQKAF…QICTNAAKQL (78 aa). Serine 2443 bears the O-(pantetheine 4'-phosphoryl)serine mark. The tract at residues 2486-2575 is disordered; sequence QKGGQEPSEQ…FDPDDRDYNP (90 aa). Composition is skewed to polar residues over residues 2505-2514 and 2522-2546; these read LHVSQGSLHT and TETS…SVTD. The span at 2547–2556 shows a compositional bias: basic and acidic residues; the sequence is TVEKRDKGDI. The span at 2557 to 2570 shows a compositional bias: acidic residues; it reads SVDEGPNEQFDPDD. Residues 2582–3007 are condensation (C) domain; the sequence is RLSSGQSRIY…SNTYMTVAKI (426 aa). The interval 3043–3436 is adenylation (A) (KR) domain; it reads HETNREDLAI…DGSLVFLGRL (394 aa). Positions 3553–3630 constitute a Carrier 2 domain; the sequence is PKLSLRQSEL…KMTMLVDLER (78 aa). Position 3590 is an O-(pantetheine 4'-phosphoryl)serine (serine 3590). The tract at residues 3679–3895 is reductase (RED) domain; it reads TGATGFLGGS…FDFKKVEEVA (217 aa).

The protein in the C-terminal section; belongs to the NRP synthetase family. Pantetheine 4'-phosphate serves as cofactor.

The protein operates within secondary metabolite biosynthesis. Hybrid PKS-NRPS synthetase; part of the gene cluster that mediates the biosynthesis of oxopyrrolidines, polyketide-amino acid hybrid compounds with feature structures of tetramic acid. The polyketide chain is first assembled by the highly reducing PKS module of opdA using acetyl-CoA as the starter unit and five malonyl-CoA as the extender units. OpdC acts as trans-acting enoyl reductase and reduces the terminal alkenyl to alkane. The 17R in oxopyrrolidine A and 15R, 17S in oxopyrrolidine B are generated by non-stereospecific catalysis of the ketoreductase (KR) domain and enoyl reductases. Then the polyketides with specific configurations are transferred to the NRPS module of opdA and linked to L-tyrosine to form an amide bond. Finally, the oxopyrrolidines are offloaded through a Dieckmann cyclization catalyzed by the terminal D domain to give a tetramic acid moiety. This is Hybrid PKS-NRPs synthetase opdA from Penicillium oxalicum (strain 114-2 / CGMCC 5302) (Penicillium decumbens).